Here is a 310-residue protein sequence, read N- to C-terminus: Quinolinate synthase (310 aa).

2 residues coordinate iminosuccinate: His27 and Ser44. Residue Cys89 coordinates [4Fe-4S] cluster. Residues 115–117 (YVN) and Ser132 each bind iminosuccinate. Cys175 serves as a coordination point for [4Fe-4S] cluster. Iminosuccinate-binding positions include 201-203 (HPE) and Thr222. Cys267 provides a ligand contact to [4Fe-4S] cluster.

It belongs to the quinolinate synthase family. Type 2 subfamily. It depends on [4Fe-4S] cluster as a cofactor.

The protein localises to the cytoplasm. It carries out the reaction iminosuccinate + dihydroxyacetone phosphate = quinolinate + phosphate + 2 H2O + H(+). It participates in cofactor biosynthesis; NAD(+) biosynthesis; quinolinate from iminoaspartate: step 1/1. Catalyzes the condensation of iminoaspartate with dihydroxyacetone phosphate to form quinolinate. This Thermus thermophilus (strain ATCC BAA-163 / DSM 7039 / HB27) protein is Quinolinate synthase.